Here is a 945-residue protein sequence, read N- to C-terminus: Xylosyltransferase 1 (945 aa).

Residues 1-17 lie on the Cytoplasmic side of the membrane; that stretch reads MQAAPCARRLARRSHSA. A helical; Signal-anchor for type II membrane protein membrane pass occupies residues 18–38; that stretch reads LLAALTVLLLQTLVVWNFSSL. The Lumenal portion of the chain corresponds to 39 to 945; sequence DSGAGERRGG…GAVKPDGRLR (907 aa). The tract at residues 42-245 is disordered; sequence AGERRGGAAV…KYDQPPKCDI (204 aa). A compositionally biased stretch (gly residues) spans 76–103; sequence RGGGGGGGGCGGGGRGPQARARGGGPGE. Basic and acidic residues predominate over residues 131–147; the sequence is KVRTDSNNENSVPKDFE. Residues 149-158 show a composition bias toward polar residues; sequence VDNSNFAPRT. Residues 163-190 show a composition bias toward basic and acidic residues; sequence HQPELAKKPPSRQKELLKRKLEQQEKGK. Asparagine 212 is a glycosylation site (N-linked (GlcNAc...) asparagine). Positions 235 to 245 are enriched in basic and acidic residues; that stretch reads TKYDQPPKCDI. Cystine bridges form between cysteine 243-cysteine 271, cysteine 287-cysteine 528, cysteine 547-cysteine 560, and cysteine 549-cysteine 558. Residues valine 319, aspartate 347, and 376-378 contribute to the UDP-alpha-D-xylose site; that span reads TIW. Residue asparagine 407 is glycosylated (N-linked (GlcNAc...) asparagine). Position 480-481 (480-481) interacts with UDP-alpha-D-xylose; that stretch reads DW. UDP-alpha-D-xylose-binding positions include serine 561 and 584-585; that span reads RK. 2 disulfide bridges follow: cysteine 661/cysteine 913 and cysteine 906/cysteine 919. A glycan (N-linked (GlcNAc...) asparagine) is linked at asparagine 763. A disordered region spans residues 926 to 945; sequence SFSPDPKSELGAVKPDGRLR.

The protein belongs to the glycosyltransferase 14 family. XylT subfamily. Monomer. Requires a divalent metal cation as cofactor. In terms of processing, contains 7 disulfide bonds. N-glycosylated.

It is found in the golgi apparatus membrane. The catalysed reaction is UDP-alpha-D-xylose + L-seryl-[protein] = 3-O-(beta-D-xylosyl)-L-seryl-[protein] + UDP + H(+). It participates in glycan metabolism; chondroitin sulfate biosynthesis. It functions in the pathway glycan metabolism; heparan sulfate biosynthesis. Its function is as follows. Catalyzes the first step in the biosynthesis of chondroitin sulfate and dermatan sulfate proteoglycans, such as DCN. Transfers D-xylose from UDP-D-xylose to specific serine residues of the core protein. Required for normal maturation of chondrocytes during bone development, normal onset of ossification and normal embryonic and postnatal skeleton development, especially of the long bones. In Pan troglodytes (Chimpanzee), this protein is Xylosyltransferase 1 (XYLT1).